Here is a 203-residue protein sequence, read N- to C-terminus: Ras-related protein Rab-30 (203 aa).

Valine 20, glycine 21, lysine 22, threonine 23, cysteine 24, and threonine 41 together coordinate GTP. Threonine 23 contacts Mg(2+). The tract at residues 36 to 44 (PGQGATIGV) is switch-I. Mg(2+)-binding residues include threonine 41 and aspartate 64. Residues glycine 67, asparagine 122, lysine 123, aspartate 125, alanine 153, and lysine 154 each coordinate GTP. A switch-II region spans residues 67-83 (GQERFRSITQSYYRSAN). Residues cysteine 199 and cysteine 200 are each lipidated (S-geranylgeranyl cysteine). Cysteine 200 is subject to Cysteine methyl ester. The propeptide at 201-203 (NFN) is removed in mature form.

This sequence belongs to the small GTPase superfamily. Rab family. Mg(2+) serves as cofactor.

It is found in the membrane. Its subcellular location is the golgi apparatus. The protein resides in the trans-Golgi network membrane. It localises to the cis-Golgi network membrane. The protein localises to the golgi apparatus membrane. It is found in the cytoplasm. Its subcellular location is the cytoplasmic vesicle. The protein resides in the autophagosome membrane. It localises to the autolysosome membrane. It carries out the reaction GTP + H2O = GDP + phosphate + H(+). Regulated by guanine nucleotide exchange factors (GEFs) which promote the exchange of bound GDP for free GTP. Regulated by GTPase activating proteins (GAPs) which increase the GTP hydrolysis activity. Inhibited by GDP dissociation inhibitors (GDIs). Functionally, the small GTPases Rab are key regulators of intracellular membrane trafficking, from the formation of transport vesicles to their fusion with membranes. Rabs cycle between an inactive GDP-bound form and an active GTP-bound form that is able to recruit to membranes different sets of downstream effectors directly responsible for vesicle formation, movement, tethering and fusion. RAB30 is required for maintaining the structural integrity of the Golgi apparatus, possibly by mediating interactions with cytoplasmic scaffolding proteins. Facilitates lipid homeostasis during fasting by regulating hepatic protein and lipid trafficking in a PPAR-alpha-dependent manner. Promotes autophagosome biogenesis during bacterial infection such as group A Streptococcus infection. This is Ras-related protein Rab-30 (RAB30) from Bos taurus (Bovine).